A 474-amino-acid polypeptide reads, in one-letter code: Lipoprotein lipase (474 aa).

Positions 1 to 27 (MESKALLLVVLGVWLQSLTAFRGGVAA) are cleaved as a signal peptide. Residues 32–53 (RDFSDIESKFALRTPEDTAEDT) form an interaction with GPIHBP1 region. Cys-54 and Cys-67 are disulfide-bonded. A glycan (N-linked (GlcNAc...) asparagine) is linked at Asn-70. Tyr-121 is subject to 3'-nitrotyrosine. Ser-159 (nucleophile) is an active-site residue. The Charge relay system role is filled by Asp-183. A 3'-nitrotyrosine modification is found at Tyr-191. 4 residues coordinate Ca(2+): Ala-194, Arg-197, Ser-199, and Asp-202. A disulfide bridge links Cys-243 with Cys-266. The tract at residues 243–266 (CNIGEAIRVIAERGLGDVDQLVKC) is essential for determining substrate specificity. His-268 (charge relay system) is an active-site residue. Intrachain disulfides connect Cys-291–Cys-310 and Cys-302–Cys-305. Positions 341–464 (FHYQVKIHFS…KGKDSAVFVK (124 aa)) constitute a PLAT domain. Tyr-343 carries the 3'-nitrotyrosine modification. Asn-386 carries N-linked (GlcNAc...) asparagine glycosylation. Residues 417–421 (WPDWW) form an important for interaction with lipoprotein particles region. An important for heparin binding region spans residues 430–434 (RIRVK). An interaction with GPIHBP1 region spans residues 443-467 (IFCAREKVSHLQKGKDSAVFVKCHD). Cysteines 445 and 465 form a disulfide.

This sequence belongs to the AB hydrolase superfamily. Lipase family. In terms of assembly, homodimer. Interacts with GPIHBP1 with 1:1 stoichiometry. Interacts with APOC2; the interaction activates LPL activity in the presence of lipids. Interaction with heparan sulfate proteoglycans is required to protect LPL against loss of activity. Associates with lipoprotein particles in blood plasma. Interacts with LMF1 and SEL1L; interaction with SEL1L is required to prevent aggregation of newly synthesized LPL in the endoplasmic reticulum (ER), and for normal export of LPL from the ER to the extracellular space. Interacts with SORL1; SORL1 acts as a sorting receptor, promoting LPL localization to endosomes and later to lysosomes, leading to degradation of newly synthesized LPL. In terms of processing, tyrosine nitration after lipopolysaccharide (LPS) challenge down-regulates the lipase activity. N-glycosylated. Detected in white and brown adipose tissue and heart muscle, especially at the lumenal surface of capillaries. Detected on capillary endothelium in the lactating mammary gland. Detected in blood plasma (at protein level). Expressed in liver, epididymal fat, heart, psoas muscle, lactating mammary gland, adrenal, lung, and ovary. Highest levels in heart and adrenal gland.

Its subcellular location is the cell membrane. It is found in the secreted. It localises to the extracellular space. The protein localises to the extracellular matrix. It catalyses the reaction a triacylglycerol + H2O = a diacylglycerol + a fatty acid + H(+). The enzyme catalyses a 1,2-diacyl-sn-glycero-3-phosphocholine + H2O = a 2-acyl-sn-glycero-3-phosphocholine + a fatty acid + H(+). The catalysed reaction is 1,2,3-tri-(9Z-octadecenoyl)-glycerol + H2O = di-(9Z)-octadecenoylglycerol + (9Z)-octadecenoate + H(+). It carries out the reaction 1,2-di-(9Z-octadecenoyl)-sn-glycero-3-phosphocholine + H2O = (9Z-octadecenoyl)-sn-glycero-3-phosphocholine + (9Z)-octadecenoate + H(+). It catalyses the reaction 1,2,3-tributanoylglycerol + H2O = dibutanoylglycerol + butanoate + H(+). The enzyme catalyses 1,2-dihexadecanoyl-sn-glycero-3-phosphocholine + H2O = hexadecanoyl-sn-glycero-3-phosphocholine + hexadecanoate + H(+). With respect to regulation, the apolipoprotein APOC2 acts as a coactivator of LPL activity. Ca(2+) binding promotes protein stability and formation of the active homodimer. Interaction with GPIHBP1 protects LPL against inactivation by ANGPTL4. Key enzyme in triglyceride metabolism. Catalyzes the hydrolysis of triglycerides from circulating chylomicrons and very low density lipoproteins (VLDL), and thereby plays an important role in lipid clearance from the blood stream, lipid utilization and storage. Although it has both phospholipase and triglyceride lipase activities it is primarily a triglyceride lipase with low but detectable phospholipase activity. Mediates margination of triglyceride-rich lipoprotein particles in capillaries. Recruited to its site of action on vascular endothelium by binding to GPIHBP1 and cell surface heparan sulfate proteoglycans. The protein is Lipoprotein lipase (Lpl) of Mus musculus (Mouse).